The following is a 166-amino-acid chain: Large ribosomal subunit protein bL9 (166 aa).

Belongs to the bacterial ribosomal protein bL9 family.

Its function is as follows. Binds to the 23S rRNA. The sequence is that of Large ribosomal subunit protein bL9 from Psychrobacter arcticus (strain DSM 17307 / VKM B-2377 / 273-4).